A 480-amino-acid polypeptide reads, in one-letter code: uncharacterized protein (480 aa).

Residues 131 to 207 (KKIIKIKNDV…KVVKVRFFIK (77 aa)) form the PUA domain.

This sequence in the C-terminal section; belongs to the PAPS reductase family.

This is an uncharacterized protein from Methanocaldococcus jannaschii (strain ATCC 43067 / DSM 2661 / JAL-1 / JCM 10045 / NBRC 100440) (Methanococcus jannaschii).